Here is a 203-residue protein sequence, read N- to C-terminus: Ras-related protein Rab-18 (203 aa).

Residues serine 20, glycine 23, lysine 24, serine 25, serine 26, aspartate 37, proline 38, threonine 43, glycine 69, lysine 126, aspartate 128, and alanine 155 each coordinate GTP. Residues 40–48 carry the Effector region motif; it reads QAATIGVDF. 2 S-geranylgeranyl cysteine lipidation sites follow: cysteine 201 and cysteine 203. Cysteine 203 carries the cysteine methyl ester modification.

The protein belongs to the small GTPase superfamily. Rab family.

The enzyme catalyses GTP + H2O = GDP + phosphate + H(+). The small GTPases Rab are key regulators of intracellular membrane trafficking, from the formation of transport vesicles to their fusion with membranes. Rabs cycle between an inactive GDP-bound form and an active GTP-bound form that is able to recruit to membranes different sets of downstream effectors directly responsible for vesicle formation, movement, tethering and fusion. Plays a role in apical endocytosis/recycling. May be implicated in transport between the plasma membrane and early endosomes. Plays a role in the shedding of pathogen spores from intestinal cells. This is Ras-related protein Rab-18 (rab-18) from Caenorhabditis elegans.